A 160-amino-acid chain; its full sequence is MPLRPCRHHQGFLPKKQWRAKFPQLIVLMGRVAAEELLPAVAVAAVVVAVVVAVERVVPLLFVHRPDSFFLIFFFQSCFVCCCCCCSCSTSLKAYSSEKEKQKYGKRGNGNTPLVQRLVTLSYLALLILVLSIELLTWFVKKQRTGNKKQKDKEKNALLL.

Topologically, residues 1–33 (MPLRPCRHHQGFLPKKQWRAKFPQLIVLMGRVA) are extracellular. The helical transmembrane segment at 34-54 (AEELLPAVAVAAVVVAVVVAV) threads the bilayer. The Cytoplasmic segment spans residues 55-68 (ERVVPLLFVHRPDS). The helical transmembrane segment at 69–89 (FFLIFFFQSCFVCCCCCCSCS) threads the bilayer. Residues 90 to 119 (TSLKAYSSEKEKQKYGKRGNGNTPLVQRLV) are Extracellular-facing. The helical transmembrane segment at 120–140 (TLSYLALLILVLSIELLTWFV) threads the bilayer. Topologically, residues 141 to 160 (KKQRTGNKKQKDKEKNALLL) are cytoplasmic.

It localises to the membrane. This is an uncharacterized protein from Saccharomyces cerevisiae (strain ATCC 204508 / S288c) (Baker's yeast).